Reading from the N-terminus, the 240-residue chain is Regulatory protein SdiA (240 aa).

The region spanning 173 to 238 is the HTH luxR-type domain; the sequence is VMTPEMNFSK…QVACYAAATG (66 aa). The segment at residues 197 to 216 is a DNA-binding region (H-T-H motif); sequence SAEIAMILSISENTVNFHQK.

Activates cell division by specifically increasing transcription from one of the two promoters that lie immediately upstream of the ftsQAZ gene cluster. Activates ydiV expression in response to extracellular autoinducer AI-1 (Vibrio fischeri autoinducer oxoC6). This is Regulatory protein SdiA (sdiA) from Escherichia coli (strain K12).